The chain runs to 264 residues: Major prion protein (264 aa).

The first 24 residues, 1-24 (MVKSHIGSWILVLFVAMWSDVGLC), serve as a signal peptide directing secretion. The segment at 25 to 41 (KKRPKPGGGWNTGGSRY) is interaction with ADGRG6. The tract at residues 25 to 241 (KKRPKPGGGW…ESQAYYQRGA (217 aa)) is interaction with GRB2, ERI3 and SYN1. The segment at 28 to 119 (PKPGGGWNTG…WNKPSKPKTN (92 aa)) is disordered. Tandem repeats lie at residues 54–62 (PQGGGGWGQ), 63–70 (PHGGGWGQ), 71–78 (PHGGGWGQ), 79–86 (PHGGGWGQ), 87–94 (PHGGGWGQ), and 95–103 (PHGGGGWGQ). The 6 X 8 AA tandem repeats of P-H-G-G-G-W-G-Q stretch occupies residues 54–103 (PQGGGGWGQPHGGGWGQPHGGGWGQPHGGGWGQPHGGGWGQPHGGGGWGQ). Residues 55–107 (QGGGGWGQPHGGGWGQPHGGGWGQPHGGGWGQPHGGGWGQPHGGGGWGQGGTH) are compositionally biased toward gly residues. Residues H72, G73, G74, H80, G81, G82, H88, G89, G90, H96, G98, and G99 each contribute to the Cu(2+) site. C190 and C225 are joined by a disulfide. N192 and N208 each carry an N-linked (GlcNAc...) asparagine glycan. The GPI-anchor amidated alanine moiety is linked to residue A241. Positions 242-264 (SVILFSSPPVILLISFLIFLIVG) are cleaved as a propeptide — removed in mature form.

It belongs to the prion family. In terms of assembly, monomer and homodimer. Has a tendency to aggregate into amyloid fibrils containing a cross-beta spine, formed by a steric zipper of superposed beta-strands. Soluble oligomers may represent an intermediate stage on the path to fibril formation. Copper binding may promote oligomerization. Interacts with GRB2, APP, ERI3/PRNPIP and SYN1. Mislocalized cytosolically exposed PrP interacts with MGRN1; this interaction alters MGRN1 subcellular location and causes lysosomal enlargement. Interacts with APP. Interacts with KIAA1191. Interacts with ADGRG6.

The protein resides in the cell membrane. It localises to the golgi apparatus. In terms of biological role, its primary physiological function is unclear. May play a role in neuronal development and synaptic plasticity. May be required for neuronal myelin sheath maintenance. May promote myelin homeostasis through acting as an agonist for ADGRG6 receptor. May play a role in iron uptake and iron homeostasis. Soluble oligomers are toxic to cultured neuroblastoma cells and induce apoptosis (in vitro). Association with GPC1 (via its heparan sulfate chains) targets PRNP to lipid rafts. Also provides Cu(2+) or Zn(2+) for the ascorbate-mediated GPC1 deaminase degradation of its heparan sulfate side chains. In Bos indicus x Bos taurus (Hybrid cattle), this protein is Major prion protein (PRNP).